A 321-amino-acid chain; its full sequence is Low affinity immunoglobulin epsilon Fc receptor (321 aa).

The Cytoplasmic portion of the chain corresponds to 1-21 (MEEGQYSEIEELPRRRCCRRG). S-palmitoyl cysteine attachment occurs at residues Cys-17 and Cys-18. The chain crosses the membrane as a helical; Signal-anchor for type II membrane protein span at residues 22–47 (TQIVLLGLVTAALWAGLLTLLLLWHW). The Extracellular portion of the chain corresponds to 48 to 321 (DTTQSLKQLE…LPTPSAPLHS (274 aa)). The N-linked (GlcNAc...) asparagine glycan is linked to Asn-63. The interval 66–85 (QVSKNLESHHGDQMAQKSQS) is disordered. 3 repeats span residues 69-89 (KNLESHHGDQMAQKSQSTQIS), 90-110 (QELEELRAEQQRLKSQDLELS), and 111-131 (WNLNGLQADLSSFKSQELNER). Intrachain disulfides connect Cys-160-Cys-288, Cys-163-Cys-174, Cys-191-Cys-282, and Cys-259-Cys-273. A C-type lectin domain is found at 162–284 (TCPEKWINFQ…RKLGAWVCDR (123 aa)). Ca(2+) is bound by residues Glu-249, Thr-251, Asn-269, and Asp-270. The tract at residues 290-321 (PPASEGSAESMGPDSRPDPDGRLPTPSAPLHS) is disordered. Ser-296 is a glycosylation site (O-linked (Xyl...) (chondroitin sulfate) serine).

Homotrimer. Interacts (via C-type lectin domain) with IGHE (via CH3 region); this interaction regulates IgE homeostasis. Interacts (via the C-terminus) with CR2/CD21 (via Sushi domain 1 and 2). In terms of processing, N- and O-glycosylated. Post-translationally, the secreted form sCD23 is produced by ADAM10-mediated ectodomain shedding. As to expression, detected in urine (at protein level).

The protein resides in the cell membrane. It localises to the secreted. Functionally, low-affinity receptor for immunoglobulin E (IgE) and CR2/CD21. Has essential roles in the regulation of IgE production and in the differentiation of B cells. On B cells, initiates IgE-dependent antigen uptake and presentation to T cells. On macrophages, upon IgE binding and antigen cross-linking induces intracellular killing of parasites through activation of L-Arginine-nitric oxide pathway. The chain is Low affinity immunoglobulin epsilon Fc receptor (FCER2) from Homo sapiens (Human).